The primary structure comprises 215 residues: 3-isopropylmalate dehydratase small subunit (215 aa).

This sequence belongs to the LeuD family. LeuD type 1 subfamily. Heterodimer of LeuC and LeuD.

The enzyme catalyses (2R,3S)-3-isopropylmalate = (2S)-2-isopropylmalate. It functions in the pathway amino-acid biosynthesis; L-leucine biosynthesis; L-leucine from 3-methyl-2-oxobutanoate: step 2/4. Functionally, catalyzes the isomerization between 2-isopropylmalate and 3-isopropylmalate, via the formation of 2-isopropylmaleate. In Xanthomonas oryzae pv. oryzae (strain MAFF 311018), this protein is 3-isopropylmalate dehydratase small subunit.